The following is a 347-amino-acid chain: MLVLGIETSCDETGVALYHTQQGLLSHALYSQIEMHGEYGGVVPELASRDHIRRLLPLIRQIFAEAGVSLRDLDAIAYTQGPGLAGALLVGASVAAALGFALKVPVLGIHHLEGHLLSPLLSDPAPAFPFVALLVSGGHTQLMEVTGLGQYRLLGETVDDAAGEAFDKTAKLLGLGYPGGPALSRLADEFTRSGQSARFELPRPMLHSGDFNFSFSGLKTAVLTLVNKHEMTPQIRGAIAQAFQEAAVEVLTEKSLAALAKTGLTQLVVAGGVGANRQLRSNLDRRAGTIGATVYYPKLEFCTDNGAMIAFAGAMRLESGESESSRLGKFTINARWDLEMQEIGREA.

Residues His-111 and His-115 each coordinate Fe cation. Substrate is bound by residues 134–138 (LVSGG), Asp-167, Gly-180, and Asn-276. Asp-304 contributes to the Fe cation binding site.

Belongs to the KAE1 / TsaD family. Fe(2+) serves as cofactor.

The protein resides in the cytoplasm. The enzyme catalyses L-threonylcarbamoyladenylate + adenosine(37) in tRNA = N(6)-L-threonylcarbamoyladenosine(37) in tRNA + AMP + H(+). Required for the formation of a threonylcarbamoyl group on adenosine at position 37 (t(6)A37) in tRNAs that read codons beginning with adenine. Is involved in the transfer of the threonylcarbamoyl moiety of threonylcarbamoyl-AMP (TC-AMP) to the N6 group of A37, together with TsaE and TsaB. TsaD likely plays a direct catalytic role in this reaction. The chain is tRNA N6-adenosine threonylcarbamoyltransferase from Nitrosospira multiformis (strain ATCC 25196 / NCIMB 11849 / C 71).